We begin with the raw amino-acid sequence, 217 residues long: GRB2-related adapter protein (217 aa).

The SH3 1 domain maps to 1–58 (MESVALYSFQATESDELAFNKGDTLKILNMEDDQNWYKAELRGAEGFVPKNYIRLKPH). An SH2 domain is found at 60–152 (WYSGRISRQL…KRQVFLQDEE (93 aa)). Positions 158–217 (PRACFAQAQFDFSAQDPSQLSFRRGDIIEVLERLDPSWWRGRLSGRIGFFPRSYVQPVHM) constitute an SH3 2 domain.

Belongs to the GRB2/sem-5/DRK family. In terms of assembly, associates through its SH2 domain with ligand-activated receptors for stem cell factor (KIT) and erythropoietin (EPOR). Also forms a stable complex with the Bcr-Abl oncoprotein. GRAP is associated with the Ras guanine nucleotide exchange factor SOS1, primarily through its N-terminal SH3 domain. Interacts with phosphorylated LAT upon TCR activation. Interacts with SHB.

It is found in the membrane. The protein resides in the synapse. Couples signals from receptor and cytoplasmic tyrosine kinases to the Ras signaling pathway. Plays a role in the inner ear and in hearing. This chain is GRB2-related adapter protein (GRAP), found in Bos taurus (Bovine).